The following is a 376-amino-acid chain: Small RNA 2'-O-methyltransferase (376 aa).

The S-adenosyl-L-methionine site is built by Thr49, Asp67, and Ser103. The Mg(2+) site is built by Glu121, Glu124, His125, and His171.

Belongs to the methyltransferase superfamily. HEN1 family. It depends on Mg(2+) as a cofactor.

The protein resides in the cytoplasm. The enzyme catalyses small RNA 3'-end nucleotide + S-adenosyl-L-methionine = small RNA 3'-end 2'-O-methylnucleotide + S-adenosyl-L-homocysteine + H(+). Methyltransferase that adds a 2'-O-methyl group at the 3'-end of piRNAs, a class of 24 to 30 nucleotide RNAs that are generated by a Dicer-independent mechanism and are primarily derived from transposons and other repeated sequence elements. This probably protects the 3'-end of piRNAs from uridylation activity and subsequent degradation. Stabilization of piRNAs is essential for gametogenesis. This Gallus gallus (Chicken) protein is Small RNA 2'-O-methyltransferase (HENMT1).